Reading from the N-terminus, the 423-residue chain is Putative competence-damage inducible protein (423 aa).

Belongs to the CinA family.

The protein is Putative competence-damage inducible protein of Streptococcus equi subsp. equi (strain 4047).